The sequence spans 308 residues: Aspartate carbamoyltransferase catalytic subunit (308 aa).

Arg-55 and Thr-56 together coordinate carbamoyl phosphate. Lys-83 serves as a coordination point for L-aspartate. Residues Arg-105, His-133, and Gln-136 each contribute to the carbamoyl phosphate site. The L-aspartate site is built by Arg-166 and Arg-220. Carbamoyl phosphate-binding residues include Gly-261 and Pro-262.

It belongs to the aspartate/ornithine carbamoyltransferase superfamily. ATCase family. As to quaternary structure, heterododecamer (2C3:3R2) of six catalytic PyrB chains organized as two trimers (C3), and six regulatory PyrI chains organized as three dimers (R2).

The catalysed reaction is carbamoyl phosphate + L-aspartate = N-carbamoyl-L-aspartate + phosphate + H(+). Its pathway is pyrimidine metabolism; UMP biosynthesis via de novo pathway; (S)-dihydroorotate from bicarbonate: step 2/3. In terms of biological role, catalyzes the condensation of carbamoyl phosphate and aspartate to form carbamoyl aspartate and inorganic phosphate, the committed step in the de novo pyrimidine nucleotide biosynthesis pathway. The polypeptide is Aspartate carbamoyltransferase catalytic subunit (Chlorobium phaeobacteroides (strain DSM 266 / SMG 266 / 2430)).